Here is a 261-residue protein sequence, read N- to C-terminus: NAD(P)H-quinone oxidoreductase subunit K, chloroplastic (261 aa).

Cysteine 43, cysteine 44, cysteine 108, and cysteine 139 together coordinate [4Fe-4S] cluster.

This sequence belongs to the complex I 20 kDa subunit family. NDH is composed of at least 16 different subunits, 5 of which are encoded in the nucleus. The cofactor is [4Fe-4S] cluster.

The protein localises to the plastid. The protein resides in the chloroplast thylakoid membrane. The catalysed reaction is a plastoquinone + NADH + (n+1) H(+)(in) = a plastoquinol + NAD(+) + n H(+)(out). The enzyme catalyses a plastoquinone + NADPH + (n+1) H(+)(in) = a plastoquinol + NADP(+) + n H(+)(out). In terms of biological role, NDH shuttles electrons from NAD(P)H:plastoquinone, via FMN and iron-sulfur (Fe-S) centers, to quinones in the photosynthetic chain and possibly in a chloroplast respiratory chain. The immediate electron acceptor for the enzyme in this species is believed to be plastoquinone. Couples the redox reaction to proton translocation, and thus conserves the redox energy in a proton gradient. This chain is NAD(P)H-quinone oxidoreductase subunit K, chloroplastic, found in Cycas taitungensis (Prince sago).